The sequence spans 114 residues: MVNEMRDNTVPHMTREDMEKRANEVANLLKTLSHPVRLMLVCTLVEGEFSVGELEQQIGIGQPTLSQQLGVLRESGIVETRRNIKQIFYRLTEAKAAQLVNALYTIFCTQEKQA.

The region spanning 17-111 (DMEKRANEVA…ALYTIFCTQE (95 aa)) is the HTH arsR-type domain. The segment at residues 51–74 (VGELEQQIGIGQPTLSQQLGVLRE) is a DNA-binding region (H-T-H motif).

Its function is as follows. Represses an operon that probably comprises itself, PD_1892, PD_1893, PD_1894 and blh. Binds to a palindromic AT-rich sequence spanning the -10 region of the blh promoter and blocks transcription of the operon. The protein is Biofilm growth-associated repressor (bigR) of Xylella fastidiosa (strain Temecula1 / ATCC 700964).